Here is a 510-residue protein sequence, read N- to C-terminus: tRNA-2-methylthio-N(6)-dimethylallyladenosine synthase (510 aa).

One can recognise an MTTase N-terminal domain in the interval 19–135 (RTFEVRTYGC…LPALLDRARH (117 aa)). Residues Cys-28, Cys-64, Cys-98, Cys-172, Cys-176, and Cys-179 each contribute to the [4Fe-4S] cluster site. Residues 158–394 (RESSYAAWVS…IELQERISLE (237 aa)) form the Radical SAM core domain. One can recognise a TRAM domain in the interval 397 to 467 (TAQIGRRVEL…PHHLIADAGL (71 aa)). The tract at residues 477–510 (DAHAAGQKPRTGVGLGMPAVGAPDPLPATTGCAR) is disordered.

The protein belongs to the methylthiotransferase family. MiaB subfamily. In terms of assembly, monomer. Requires [4Fe-4S] cluster as cofactor.

It is found in the cytoplasm. It catalyses the reaction N(6)-dimethylallyladenosine(37) in tRNA + (sulfur carrier)-SH + AH2 + 2 S-adenosyl-L-methionine = 2-methylsulfanyl-N(6)-dimethylallyladenosine(37) in tRNA + (sulfur carrier)-H + 5'-deoxyadenosine + L-methionine + A + S-adenosyl-L-homocysteine + 2 H(+). Its function is as follows. Catalyzes the methylthiolation of N6-(dimethylallyl)adenosine (i(6)A), leading to the formation of 2-methylthio-N6-(dimethylallyl)adenosine (ms(2)i(6)A) at position 37 in tRNAs that read codons beginning with uridine. The sequence is that of tRNA-2-methylthio-N(6)-dimethylallyladenosine synthase from Mycolicibacterium vanbaalenii (strain DSM 7251 / JCM 13017 / BCRC 16820 / KCTC 9966 / NRRL B-24157 / PYR-1) (Mycobacterium vanbaalenii).